Consider the following 447-residue polypeptide: Zinc finger protein ZIC 1 (447 aa).

The segment at 225–260 (LICKWIEPEQLANPKKSCNKTFSTMHELVTHVTVEH) adopts a C2H2-type 1; atypical zinc-finger fold. The segment at 269-296 (HICFWEECPREGKPFKAKYKLVNHIRVH) adopts a C2H2-type 2; atypical zinc-finger fold. 3 consecutive C2H2-type zinc fingers follow at residues 302–326 (FPCP…KRTH), 332–356 (FKCE…MHVH), and 362–384 (YLCK…MKVH). Residues 375–434 (SSLRKHMKVHESSSQGSQPSPAASSGYESSTPPTIVSPTTDNPTTSSMSPSSSAVHHTAG) are disordered. Residues 386–427 (SSSQGSQPSPAASSGYESSTPPTIVSPTTDNPTTSSMSPSSS) are compositionally biased toward low complexity.

The protein belongs to the GLI C2H2-type zinc-finger protein family. As to quaternary structure, interacts (via the C2H2-type domains 3, 4 and 5) with MDFIC (via the C2H2-type domains 3, 4 and 5). Interacts with GLI1; the interaction enhances transcription activation. Interacts with GLI2. Interacts with GLI3; the interaction enhances transcription activation. In terms of tissue distribution, expressed in osteoblasts (at protein level). Expressed in the CNS. A high level expression is seen in the cerebellum, while a low level expression is seen in the olfactory bulb, diencephalon, and brainstem. Expressed in lumbar spine and iliac crest.

The protein localises to the nucleus. The protein resides in the cytoplasm. Its function is as follows. Acts as a transcriptional activator. Involved in neurogenesis. Plays important roles in the early stage of organogenesis of the CNS, as well as during dorsal spinal cord development and maturation of the cerebellum. Involved in the spatial distribution of mossy fiber (MF) neurons within the pontine gray nucleus (PGN). Plays a role in the regulation of MF axon pathway choice. Promotes MF migration towards ipsilaterally-located cerebellar territories. May have a role in shear flow mechanotransduction in osteocytes. Retains nuclear GLI1 and GLI3 in the cytoplasm. Binds to the minimal GLI-consensus sequence 5'-TGGGTGGTC-3'. This is Zinc finger protein ZIC 1 (Zic1) from Mus musculus (Mouse).